Here is a 292-residue protein sequence, read N- to C-terminus: 33 kDa chaperonin (292 aa).

Disulfide bonds link cysteine 230–cysteine 232 and cysteine 263–cysteine 266.

The protein belongs to the HSP33 family. Under oxidizing conditions two disulfide bonds are formed involving the reactive cysteines. Under reducing conditions zinc is bound to the reactive cysteines and the protein is inactive.

It localises to the cytoplasm. Its function is as follows. Redox regulated molecular chaperone. Protects both thermally unfolding and oxidatively damaged proteins from irreversible aggregation. Plays an important role in the bacterial defense system toward oxidative stress. The sequence is that of 33 kDa chaperonin from Salmonella choleraesuis (strain SC-B67).